Consider the following 101-residue polypeptide: Large ribosomal subunit protein uL24 (101 aa).

Belongs to the universal ribosomal protein uL24 family. As to quaternary structure, part of the 50S ribosomal subunit.

In terms of biological role, one of two assembly initiator proteins, it binds directly to the 5'-end of the 23S rRNA, where it nucleates assembly of the 50S subunit. Functionally, one of the proteins that surrounds the polypeptide exit tunnel on the outside of the subunit. This chain is Large ribosomal subunit protein uL24, found in Elusimicrobium minutum (strain Pei191).